The chain runs to 119 residues: UPF0145 protein Bcep18194_B0595 (119 aa).

The protein belongs to the UPF0145 family.

The protein is UPF0145 protein Bcep18194_B0595 of Burkholderia lata (strain ATCC 17760 / DSM 23089 / LMG 22485 / NCIMB 9086 / R18194 / 383).